Reading from the N-terminus, the 171-residue chain is 3-hydroxydecanoyl-[acyl-carrier-protein] dehydratase (171 aa).

Residue His-70 is part of the active site.

The protein belongs to the thioester dehydratase family. FabA subfamily. As to quaternary structure, homodimer.

The protein localises to the cytoplasm. The catalysed reaction is a (3R)-hydroxyacyl-[ACP] = a (2E)-enoyl-[ACP] + H2O. It carries out the reaction (3R)-hydroxydecanoyl-[ACP] = (2E)-decenoyl-[ACP] + H2O. The enzyme catalyses (2E)-decenoyl-[ACP] = (3Z)-decenoyl-[ACP]. It functions in the pathway lipid metabolism; fatty acid biosynthesis. In terms of biological role, necessary for the introduction of cis unsaturation into fatty acids. Catalyzes the dehydration of (3R)-3-hydroxydecanoyl-ACP to E-(2)-decenoyl-ACP and then its isomerization to Z-(3)-decenoyl-ACP. Can catalyze the dehydratase reaction for beta-hydroxyacyl-ACPs with saturated chain lengths up to 16:0, being most active on intermediate chain length. The protein is 3-hydroxydecanoyl-[acyl-carrier-protein] dehydratase of Shewanella woodyi (strain ATCC 51908 / MS32).